Consider the following 381-residue polypeptide: Cobalt-precorrin-5B C(1)-methyltransferase (381 aa).

It belongs to the CbiD family.

It carries out the reaction Co-precorrin-5B + S-adenosyl-L-methionine = Co-precorrin-6A + S-adenosyl-L-homocysteine. The protein operates within cofactor biosynthesis; adenosylcobalamin biosynthesis; cob(II)yrinate a,c-diamide from sirohydrochlorin (anaerobic route): step 6/10. In terms of biological role, catalyzes the methylation of C-1 in cobalt-precorrin-5B to form cobalt-precorrin-6A. This is Cobalt-precorrin-5B C(1)-methyltransferase from Clostridium botulinum (strain Eklund 17B / Type B).